The chain runs to 236 residues: Probable glutathione S-transferase GSTU6 (236 aa).

The 80-residue stretch at 5 to 84 (GELKLLGVWS…YIDEVWPGGA (80 aa)) folds into the GST N-terminal domain. Residues Ser15, Lys42, Val56, and 68–69 (ES) contribute to the glutathione site. One can recognise a GST C-terminal domain in the interval 94 to 228 (DPYERAVARF…KLLEFRQTLL (135 aa)).

This sequence belongs to the GST superfamily. Tau family. Expressed in seedling shoots and roots.

The enzyme catalyses RX + glutathione = an S-substituted glutathione + a halide anion + H(+). Conjugation of reduced glutathione to a wide number of exogenous and endogenous hydrophobic electrophiles. In Oryza sativa subsp. japonica (Rice), this protein is Probable glutathione S-transferase GSTU6 (GSTU6).